The following is a 205-amino-acid chain: High frequency lysogenization protein HflD homolog (205 aa).

Belongs to the HflD family.

The protein localises to the cytoplasm. Its subcellular location is the cell inner membrane. The polypeptide is High frequency lysogenization protein HflD homolog (Vibrio campbellii (strain ATCC BAA-1116)).